The sequence spans 664 residues: MADAFDPSDTRPDELAAVARQKLLVVLGQLQTYIFQVELLKRCDPQVARHQIGKLKLNALQVRAVSRHFMEGMSSQAATLITPLTLALELSLEYARREGEKLLEALNDLGERSSPVAYFEGTMGLARGCPHHQAVKLATYGGEIDKELCFLHDVENFLKQMNYCHLITPASAAAEALVSVKAFLARTVGSELIVPPEISDPSHPCHVCFEELCVTANQGATASRRLAGKICDHVTQQARVRLDADEMRRNLPHVVGLSEARRARALHALEVSSKMTEANSGGPAEAPGPAAAQEREASALLDAHHVFKSAPPGLYAVSELRFWLSSGDRTSGSTVDAFADNLSALAERERRYETGAVAVELAAFGRRGEHFDRTFGDRVASLDMVDALFVGGQSAAPDDQIEALVRACYNHHLSAPVLRQLAGSEHGDAEALRSALEGLHAAEDPPGDGNAEKEARRAPSLGGGPEDDWAALAARAAADVGARRRLYADRLTKRSLASLGRCVREQRGELEKMLRVSTYGEVLPTVFAAVCNGFAARTRFCELTARAGTVIDNRGNPDTFDTHRFMRASLMRHRVDPALLPGITHQFFELVNGPLFDHATHGFAQPPNTALYFSVENVGLLPHLKEELARFMMGKADSDWAISEFQKFYHFDGTSGITPTQRIA.

The C3H1-type zinc-finger motif lies at 205–233; it reads CHVCFEELCVTANQGATASRRLAGKICDH. 2 disordered regions span residues 273–295 and 440–466; these read SKMTEANSGGPAEAPGPAAAQER and HAAEDPPGDGNAEKEARRAPSLGGGPE. The segment covering 281–292 has biased composition (low complexity); that stretch reads GGPAEAPGPAAA.

The protein belongs to the herpesviridae TRM1 protein family. As to quaternary structure, associates with TRM2 and TRM3 to form the tripartite terminase complex. Interacts with portal protein.

The protein localises to the host nucleus. Its function is as follows. Component of the molecular motor that translocates viral genomic DNA in empty capsid during DNA packaging. Forms a tripartite terminase complex together with TRM2 and TRM3 in the host cytoplasm. Once the complex reaches the host nucleus, it interacts with the capsid portal vertex. This portal forms a ring in which genomic DNA is translocated into the capsid. TRM1 carries an endonuclease activity that plays an important role for the cleavage of concatemeric viral DNA into unit length genomes. The sequence is that of Tripartite terminase subunit 1 from Bos taurus (Bovine).